The sequence spans 374 residues: Pectate lyase 3 (374 aa).

Positions 1-22 (MKYLLPSAAAGLLLLAAQPTMA) are cleaved as a signal peptide. Cys93 and Cys176 are joined by a disulfide. Positions 150, 152, 187, and 191 each coordinate Ca(2+). The active site involves Arg239. A disulfide bridge links Cys350 with Cys373.

It belongs to the polysaccharide lyase 1 family. PLADES subfamily. It depends on Ca(2+) as a cofactor.

The protein localises to the secreted. It catalyses the reaction Eliminative cleavage of (1-&gt;4)-alpha-D-galacturonan to give oligosaccharides with 4-deoxy-alpha-D-galact-4-enuronosyl groups at their non-reducing ends.. The protein operates within glycan metabolism; pectin degradation; 2-dehydro-3-deoxy-D-gluconate from pectin: step 2/5. Its function is as follows. Involved in maceration and soft-rotting of plant tissue. The polypeptide is Pectate lyase 3 (pel3) (Pectobacterium carotovorum (Erwinia carotovora)).